A 515-amino-acid polypeptide reads, in one-letter code: MKKKILLMMSLISVFFAWQLTQAKQVLAEGKVKVVTTFYPVYEFTKGVIGNDGDVSMLMKAGTEPHDFEPSTKDIKKIQDADAFVYMDDNMETWVSDVKKSLTSKKVTIVKGTGNMLLVAGAGHDHHHEDADKKHEHNKHSEEGHNHAFDPHVWLSPYRSITVVENIRDSLSKAYPEKAENFKANAATYIEKLKELDKDYTAALSDAKQKSFVTQHAAFGYMALDYGLNQISINGVTPDAEPSAKRIATLSKYVKKYGIKYIYFEENASSKVAKTLAKEAGVKAAVLSPLEGLTEKEMKAGQDYFTVMRKNLETLRLTTDVAGKEILPEKDTTKTVYNGYFKDKEVKDRQLSDWSGSWQSVYPYLQDGTLDQVWDYKAKKSKGKMTAAEYKDYYTTGYKTDVEQIKINGKKKTMTFVRNGEKKTFTYTYAGKEILTYPKGNRGVRFMFEAKEPNAGEFKYVQFSDHAIAPEKAEHFHLYWGGDSQEKLHKELEHWPTYYGSDLSGREIAQEINAH.

An N-terminal signal peptide occupies residues M1–A28. H66 is a binding site for Zn(2+). The disordered stretch occupies residues D125–A148. A his-rich loop region spans residues E129–A148. 3 residues coordinate Zn(2+): H152, H216, and E291.

Belongs to the bacterial solute-binding protein 9 family.

Part of the ATP-binding cassette (ABC) transport system AdcABC involved in zinc import. Binds zinc with high affinity and specificity and delivers it to the membrane permease for translocation into the cytoplasm. This chain is Zinc-binding protein AdcA (adcA), found in Streptococcus pyogenes serotype M6 (strain ATCC BAA-946 / MGAS10394).